A 357-amino-acid chain; its full sequence is NADH-quinone oxidoreductase subunit H (357 aa).

The next 8 membrane-spanning stretches (helical) occupy residues 20-40 (WLLV…MGCV), 92-112 (ALFV…WAVI), 127-147 (LLFV…AGWA), 165-185 (ISYE…SGSL), 203-223 (GLTF…IYII), 259-279 (FFLA…LMFL), 294-314 (IPGW…FIWF), and 329-349 (LGWK…AIWM).

The protein belongs to the complex I subunit 1 family. NDH-1 is composed of 14 different subunits. Subunits NuoA, H, J, K, L, M, N constitute the membrane sector of the complex.

It is found in the cell inner membrane. The catalysed reaction is a quinone + NADH + 5 H(+)(in) = a quinol + NAD(+) + 4 H(+)(out). In terms of biological role, NDH-1 shuttles electrons from NADH, via FMN and iron-sulfur (Fe-S) centers, to quinones in the respiratory chain. The immediate electron acceptor for the enzyme in this species is believed to be ubiquinone. Couples the redox reaction to proton translocation (for every two electrons transferred, four hydrogen ions are translocated across the cytoplasmic membrane), and thus conserves the redox energy in a proton gradient. This subunit may bind ubiquinone. This chain is NADH-quinone oxidoreductase subunit H, found in Herminiimonas arsenicoxydans.